The sequence spans 267 residues: Proenkephalin-A (267 aa).

Positions 1–24 (MARFLTLCTWLLLLGPGLLATVRA) are cleaved as a signal peptide. 3 disulfides stabilise this stretch: Cys-26–Cys-48, Cys-30–Cys-52, and Cys-33–Cys-65. Residues 163 to 175 (TGDNRERSHHQDG) are compositionally biased toward basic and acidic residues. Residues 163-182 (TGDNRERSHHQDGSDNEEEV) form a disordered region. 2 consecutive propeptides follow at residues 196 to 207 (SPQLEDEAKELQ) and 217 to 227 (VGRPEWWMDYQ). At Ser-251 the chain carries Phosphoserine.

Belongs to the opioid neuropeptide precursor family. Proenkephalin-A is cleaved by CTSL to generate Met-enkephalin. In terms of processing, processed and degraded by ACE. Post-translationally, probably cleaved by ACE. Processed by ACE to generate Met-enkephalin in the nucleus accumbens of the brain. In terms of processing, the N-terminal domain contains 6 conserved cysteines thought to be involved in disulfide bonding and/or processing.

It localises to the cytoplasmic vesicle. It is found in the secretory vesicle. The protein localises to the chromaffin granule lumen. The protein resides in the secreted. In terms of biological role, neuropeptide that competes with and mimic the effects of opiate drugs. They play a role in a number of physiologic functions, including pain perception and responses to stress. Its function is as follows. Met-enkephalin-Arg-Phe neuropeptide acts as a strong ligand of Mu-type opioid receptor OPRM1. Met-enkephalin-Arg-Phe-binding to OPRM1 in the nucleus accumbens of the brain increases activation of OPRM1, leading to long-term synaptic depression of glutamate release. Increases glutamate release in the striatum and decreases GABA concentration in the striatum. Functionally, increases glutamate release in the striatum. This is Proenkephalin-A from Homo sapiens (Human).